We begin with the raw amino-acid sequence, 546 residues long: Adenine DNA glycosylase (546 aa).

The segment at 19–51 (RAAVGSGHRKQAASQEGRQKHAKNNSQAKPSAC) is disordered. Residue E131 is the Proton donor/acceptor of the active site. C287, C294, C297, and C303 together coordinate [4Fe-4S] cluster. Residues 364–495 (PREESSATCV…AMKKVFRVYQ (132 aa)) enclose the Nudix hydrolase domain. The Nudix box motif lies at 404-426 (VTWEPSEQLQRKALLQELQRWAG).

This sequence belongs to the Nth/MutY family. The cofactor is [4Fe-4S] cluster.

Its subcellular location is the nucleus. The protein resides in the mitochondrion. The catalysed reaction is Hydrolyzes free adenine bases from 7,8-dihydro-8-oxoguanine:adenine mismatched double-stranded DNA, leaving an apurinic site.. Its function is as follows. Involved in oxidative DNA damage repair. Initiates repair of A*oxoG to C*G by removing the inappropriately paired adenine base from the DNA backbone. Possesses both adenine and 2-OH-A DNA glycosylase activities. This Homo sapiens (Human) protein is Adenine DNA glycosylase (MUTYH).